We begin with the raw amino-acid sequence, 257 residues long: Mitochondrial distribution and morphology protein 12 (257 aa).

Residues 1 to 256 form the SMP-LTD domain; that stretch reads MSFEINWEKL…WPSWVNLDFN (256 aa). Residues 74-98 are disordered; the sequence is YEEDNETSSEMHGRDGQNVGESGEE.

Belongs to the MDM12 family. As to quaternary structure, component of the ER-mitochondria encounter structure (ERMES) or MDM complex, composed of MMM1, MDM10, MDM12 and MDM34. An MMM1 homodimer associates with one molecule of MDM12 on each side in a pairwise head-to-tail manner, and the SMP-LTD domains of MMM1 and MDM12 generate a continuous hydrophobic tunnel for phospholipid trafficking.

It is found in the mitochondrion outer membrane. The protein localises to the endoplasmic reticulum membrane. Functionally, component of the ERMES/MDM complex, which serves as a molecular tether to connect the endoplasmic reticulum (ER) and mitochondria. Components of this complex are involved in the control of mitochondrial shape and protein biogenesis, and function in nonvesicular lipid trafficking between the ER and mitochondria. MDM12 is required for the interaction of the ER-resident membrane protein MMM1 and the outer mitochondrial membrane-resident beta-barrel protein MDM10. The MDM12-MMM1 subcomplex functions in the major beta-barrel assembly pathway that is responsible for biogenesis of all mitochondrial outer membrane beta-barrel proteins, and acts in a late step after the SAM complex. The MDM10-MDM12-MMM1 subcomplex further acts in the TOM40-specific pathway after the action of the MDM12-MMM1 complex. Essential for establishing and maintaining the structure of mitochondria and maintenance of mtDNA nucleoids. The polypeptide is Mitochondrial distribution and morphology protein 12 (Candida glabrata (strain ATCC 2001 / BCRC 20586 / JCM 3761 / NBRC 0622 / NRRL Y-65 / CBS 138) (Yeast)).